The chain runs to 376 residues: Chaperone protein DnaJ (376 aa).

In terms of domain architecture, J spans 5–69 (DYYEVLGISK…QKRAQYDQYG (65 aa)). The CR-type zinc finger occupies 133–215 (GKDAEIEIPR…CHGKGRVTKT (83 aa)). Zn(2+) contacts are provided by C146, C149, C163, C166, C189, C192, C203, and C206. CXXCXGXG motif repeat units follow at residues 146–153 (CDTCHGSG), 163–170 (CSHCGGKG), 189–196 (CQYCNGTG), and 203–210 (CSTCHGKG).

Belongs to the DnaJ family. In terms of assembly, homodimer. Requires Zn(2+) as cofactor.

The protein localises to the cytoplasm. Functionally, participates actively in the response to hyperosmotic and heat shock by preventing the aggregation of stress-denatured proteins and by disaggregating proteins, also in an autonomous, DnaK-independent fashion. Unfolded proteins bind initially to DnaJ; upon interaction with the DnaJ-bound protein, DnaK hydrolyzes its bound ATP, resulting in the formation of a stable complex. GrpE releases ADP from DnaK; ATP binding to DnaK triggers the release of the substrate protein, thus completing the reaction cycle. Several rounds of ATP-dependent interactions between DnaJ, DnaK and GrpE are required for fully efficient folding. Also involved, together with DnaK and GrpE, in the DNA replication of plasmids through activation of initiation proteins. This is Chaperone protein DnaJ from Listeria welshimeri serovar 6b (strain ATCC 35897 / DSM 20650 / CCUG 15529 / CIP 8149 / NCTC 11857 / SLCC 5334 / V8).